We begin with the raw amino-acid sequence, 397 residues long: MEKKTLSDIATQGKRVLMRVDFNVPLDENKNITDDKRIVESLPSIRKVIEEGGRLILMSHLGRPKGKVNAEFSLAPVAARLSELLDCPVGMAKDCIGTEVMQQVLALQDGEVLLLENLRFHAEEEANDADFAKELASLGEIYVNDAFGTAHRAHASTEGITHYVQTAVAGFLIERELRYLGKALQEPERPFVAILGGSKISGKIDVLENLFKKVDTVLIGGAMVFTFFKAQGYEVGKSLVEESKIELALSILEQAKAKGIKLLLPTDVVVTAEISADAESSVASIADMPNNLIGVDIGPETAAAYRNEIIGARTVLWNGPMGVFELDNFATGTIAVAQALADATAQGATTIVGGGDSAAAIAKAGLASEITHISTGGGASLEFLEGKELPGIAALNN.

Residues 21–23 (DFN), Arg37, 60–63 (HLGR), Arg119, and Arg152 each bind substrate. ATP contacts are provided by residues Lys203, Gly294, Glu325, and 354–357 (GGDS).

Belongs to the phosphoglycerate kinase family. In terms of assembly, monomer.

It localises to the cytoplasm. It catalyses the reaction (2R)-3-phosphoglycerate + ATP = (2R)-3-phospho-glyceroyl phosphate + ADP. The protein operates within carbohydrate degradation; glycolysis; pyruvate from D-glyceraldehyde 3-phosphate: step 2/5. The chain is Phosphoglycerate kinase from Chlorobium chlorochromatii (strain CaD3).